The primary structure comprises 758 residues: 5-methyltetrahydropteroyltriglutamate--homocysteine methyltransferase (758 aa).

Residues 15 to 18 (RELK) and Lys-114 contribute to the 5-methyltetrahydropteroyltri-L-glutamate site. Residues 433-435 (IGS) and Glu-486 each bind L-homocysteine. Residues 433–435 (IGS) and Glu-486 contribute to the L-methionine site. 5-methyltetrahydropteroyltri-L-glutamate contacts are provided by residues 517-518 (RC) and Trp-563. Residue Asp-601 participates in L-homocysteine binding. Asp-601 lines the L-methionine pocket. Position 607 (Glu-607) interacts with 5-methyltetrahydropteroyltri-L-glutamate. His-643, Cys-645, and Glu-667 together coordinate Zn(2+). Catalysis depends on His-696, which acts as the Proton donor. A Zn(2+)-binding site is contributed by Cys-728.

It belongs to the vitamin-B12 independent methionine synthase family. Zn(2+) serves as cofactor.

It catalyses the reaction 5-methyltetrahydropteroyltri-L-glutamate + L-homocysteine = tetrahydropteroyltri-L-glutamate + L-methionine. Its pathway is amino-acid biosynthesis; L-methionine biosynthesis via de novo pathway; L-methionine from L-homocysteine (MetE route): step 1/1. In terms of biological role, catalyzes the transfer of a methyl group from 5-methyltetrahydrofolate to homocysteine resulting in methionine formation. This chain is 5-methyltetrahydropteroyltriglutamate--homocysteine methyltransferase, found in Syntrophotalea carbinolica (strain DSM 2380 / NBRC 103641 / GraBd1) (Pelobacter carbinolicus).